A 336-amino-acid polypeptide reads, in one-letter code: tRNA N6-adenosine threonylcarbamoyltransferase (336 aa).

Fe cation contacts are provided by His-114 and His-118. Substrate is bound by residues 136 to 140, Asp-169, Gly-182, Asp-186, and Asn-275; that span reads LVSGG. Residue Asp-301 participates in Fe cation binding.

This sequence belongs to the KAE1 / TsaD family. It depends on Fe(2+) as a cofactor.

The protein resides in the cytoplasm. The catalysed reaction is L-threonylcarbamoyladenylate + adenosine(37) in tRNA = N(6)-L-threonylcarbamoyladenosine(37) in tRNA + AMP + H(+). Required for the formation of a threonylcarbamoyl group on adenosine at position 37 (t(6)A37) in tRNAs that read codons beginning with adenine. Is involved in the transfer of the threonylcarbamoyl moiety of threonylcarbamoyl-AMP (TC-AMP) to the N6 group of A37, together with TsaE and TsaB. TsaD likely plays a direct catalytic role in this reaction. This chain is tRNA N6-adenosine threonylcarbamoyltransferase, found in Streptococcus gordonii (strain Challis / ATCC 35105 / BCRC 15272 / CH1 / DL1 / V288).